A 414-amino-acid polypeptide reads, in one-letter code: Pre-mRNA-processing protein 45 (414 aa).

Disordered stretches follow at residues Glu-128 to Ile-159 and Arg-264 to Lys-292. Polar residues predominate over residues Leu-135–Lys-146.

It belongs to the SNW family. Associated with the spliceosome.

The protein localises to the nucleus. Involved in pre-mRNA splicing. This Candida glabrata (strain ATCC 2001 / BCRC 20586 / JCM 3761 / NBRC 0622 / NRRL Y-65 / CBS 138) (Yeast) protein is Pre-mRNA-processing protein 45 (PRP45).